The sequence spans 268 residues: Phosphatidylglycerol--prolipoprotein diacylglyceryl transferase (268 aa).

4 consecutive transmembrane segments (helical) span residues 14–34, 57–77, 90–110, and 117–137; these read LGPIKIHWYGLMYLLGIFAGW, LTFYVALGVILGGRIGYIIFY, FFLWDGGMSFHGGFIGVLIAF, and IGANFFDLGEFVAPVIPIGLG. Arg140 provides a ligand contact to a 1,2-diacyl-sn-glycero-3-phospho-(1'-sn-glycerol). Transmembrane regions (helical) follow at residues 174 to 194, 200 to 220, and 240 to 260; these read QLFEFFFEGVVLFSVLWLVTI, YLVLGLFMFLYGCARFICEFF, and ILSIPMILLGAVILIAVFIKI.

The protein belongs to the Lgt family.

Its subcellular location is the cell inner membrane. It carries out the reaction L-cysteinyl-[prolipoprotein] + a 1,2-diacyl-sn-glycero-3-phospho-(1'-sn-glycerol) = an S-1,2-diacyl-sn-glyceryl-L-cysteinyl-[prolipoprotein] + sn-glycerol 1-phosphate + H(+). It functions in the pathway protein modification; lipoprotein biosynthesis (diacylglyceryl transfer). In terms of biological role, catalyzes the transfer of the diacylglyceryl group from phosphatidylglycerol to the sulfhydryl group of the N-terminal cysteine of a prolipoprotein, the first step in the formation of mature lipoproteins. This chain is Phosphatidylglycerol--prolipoprotein diacylglyceryl transferase, found in Francisella tularensis subsp. tularensis (strain FSC 198).